Here is a 94-residue protein sequence, read N- to C-terminus: Small ribosomal subunit protein bS6 (94 aa).

The protein belongs to the bacterial ribosomal protein bS6 family.

Binds together with bS18 to 16S ribosomal RNA. The sequence is that of Small ribosomal subunit protein bS6 from Phytoplasma mali (strain AT).